Consider the following 151-residue polypeptide: UPF0208 membrane protein YfbV (151 aa).

2 consecutive transmembrane segments (helical) span residues 46 to 65 (YAIR…QIAL) and 69 to 91 (LGPA…WWLG).

It belongs to the UPF0208 family.

Its subcellular location is the cell inner membrane. The chain is UPF0208 membrane protein YfbV from Escherichia coli O1:K1 / APEC.